Here is a 1060-residue protein sequence, read N- to C-terminus: Histone lysine demethylase PHF8 (1060 aa).

The PHD-type zinc finger occupies 41–92 (PVYCLCRLPYDVTRFMIECDMCQDWFHGSCVGVEEEKAADIDLYHCPNCEVL). Phosphoserine; by CDK1 is present on Ser-69. The disordered stretch occupies residues 100-120 (KRRGSSKGHDTHKGKPVKTGS). The linker stretch occupies residues 101–115 (RRGSSKGHDTHKGKP). The residue at position 120 (Ser-120) is a Phosphoserine; by CDK1. The region spanning 231–387 (FSDTRLSNLV…MQLKAYEIEK (157 aa)) is the JmjC domain. Residue Thr-280 coordinates substrate. 2 residues coordinate Fe cation: His-283 and Asp-285. Lys-300 serves as a coordination point for substrate. Residue His-355 participates in Fe cation binding. Residues 508 to 517 (AHSTSVSMSR) are compositionally biased toward polar residues. Residues 508–534 (AHSTSVSMSRLSLPSKNGSKKKGLKPK) form a disordered region. A Phosphoserine modification is found at Ser-651. Tyr-704 bears the Phosphotyrosine mark. Phosphothreonine occurs at positions 705 and 706. Ser-722 carries the phosphoserine modification. 3 disordered regions span residues 768-840 (QSSS…EQDS), 852-902 (YPSL…GTRV), and 915-1046 (KLAQ…KQRL). 2 stretches are compositionally biased toward low complexity: residues 769-778 (SSSSSPATSS) and 785-804 (GGQDRSSGSSSSGLGTVSNS). Residues Ser-804, Ser-826, Ser-834, Ser-854, Ser-857, and Ser-880 each carry the phosphoserine modification. The segment covering 826 to 839 (SEEEEENASLDEQD) has biased composition (acidic residues). Residues 891 to 900 (KQDRPVREGT) are compositionally biased toward basic and acidic residues. The segment covering 924–934 (AQKKKYIKKKP) has biased composition (basic residues). A compositionally biased stretch (polar residues) spans 1018–1030 (RRPSVGSQSNQAG).

This sequence belongs to the JHDM1 histone demethylase family. JHDM1D subfamily. Interacts with POLR1B, UBTF, SETD1A, HCFC1, E2F1 and ZNF711. Interacts with ZNF263; recruited to the SIX3 promoter along with other proteins involved in chromatin modification and transcriptional corepression where it contributes to transcriptional repression. It depends on Fe(2+) as a cofactor. Phosphorylation at Ser-69 and Ser-120 are required for dissociation from chromatin and accumulation of H4K20Me1 levels during prophase.

It is found in the nucleus. The protein localises to the nucleolus. It catalyses the reaction N(6),N(6)-dimethyl-L-lysyl(36)-[histone H3] + 2 2-oxoglutarate + 2 O2 = L-lysyl(36)-[histone H3] + 2 formaldehyde + 2 succinate + 2 CO2. The catalysed reaction is N(6),N(6)-dimethyl-L-lysyl(9)-[histone H3] + 2 2-oxoglutarate + 2 O2 = L-lysyl(9)-[histone H3] + 2 formaldehyde + 2 succinate + 2 CO2. Histone lysine demethylase with selectivity for the di- and monomethyl states that plays a key role cell cycle progression, rDNA transcription and brain development. Demethylates mono- and dimethylated histone H3 'Lys-9' residue (H3K9Me1 and H3K9Me2), dimethylated H3 'Lys-27' (H3K27Me2) and monomethylated histone H4 'Lys-20' residue (H4K20Me1). Acts as a transcription activator as H3K9Me1, H3K9Me2, H3K27Me2 and H4K20Me1 are epigenetic repressive marks. Involved in cell cycle progression by being required to control G1-S transition. Acts as a coactivator of rDNA transcription, by activating polymerase I (pol I) mediated transcription of rRNA genes. Required for brain development, probably by regulating expression of neuron-specific genes. Only has activity toward H4K20Me1 when nucleosome is used as a substrate and when not histone octamer is used as substrate. May also have weak activity toward dimethylated H3 'Lys-36' (H3K36Me2), however, the relevance of this result remains unsure in vivo. Specifically binds trimethylated 'Lys-4' of histone H3 (H3K4me3), affecting histone demethylase specificity: has weak activity toward H3K9Me2 in absence of H3K4me3, while it has high activity toward H3K9me2 when binding H3K4me3. Positively modulates transcription of histone demethylase KDM5C, acting synergistically with transcription factor ARX; synergy may be related to enrichment of histone H3K4me3 in regulatory elements. In Homo sapiens (Human), this protein is Histone lysine demethylase PHF8 (PHF8).